We begin with the raw amino-acid sequence, 416 residues long: MQITILGSGVIGVTTAYYLAKLGHEVTVIDREEGPAPETSFANAGQVSPGYASPWAAPGIPLKAAKWLFQKHAPLILRLTTDPVQYRWLLQMLANCTDSRYKINKTRMVRVAEYSRDCLIELRKDTGIEYDQRSQGTLQLFREQYQLDGIGKDIEVLRQDGVPFEVLDRDGCVNVEPALAHAKDKFVGGLRLPNDETGDCFKFTNALAKIAEGLGVKFRFGVNIKSLLMSGGKISGVETSEGIVTAERYVVALGSYTPALIKALGLNAPIYPVKGYSITAPIVDESRAPVSTVLDESYKIAITRLGDRIRVGGMAEVSGFTDDLPAARRATLDLSVTDLFPGGDLKAATFWSGLRPMTPDSTPIIGGTRYDNLFINAGHGTLGWTMACGSGRLLADLISGNKADIRADDLGIARYN.

Position 3–17 (3–17 (ITILGSGVIGVTTAY)) interacts with FAD.

This sequence belongs to the DadA oxidoreductase family. It depends on FAD as a cofactor.

It catalyses the reaction a D-alpha-amino acid + A + H2O = a 2-oxocarboxylate + AH2 + NH4(+). In terms of biological role, oxidative deamination of D-amino acids. The polypeptide is D-amino acid dehydrogenase (Brucella suis biovar 1 (strain 1330)).